The sequence spans 677 residues: MTQVAKKILVTCALPYANGSIHLGHMLEHIQADVWVRYQRMRGHEVNFICADDAHGTPIMLKAQQLGITPEQMIGEMSQEHQTDFAGFDISYDNYHSTHSDENRELSELIYTRLKENGFIKNRTISQLYDPEKGMFLPDRFVKGTCPKCKSPDQYGDNCEVCGATYSPTELIDPKSVVSGATPVMRDSEHFFFDLPSFSEMLQAWTRSGALQEQVANKMQEWFESGLQQWDISRDAPYFGFEIPNAPGKYFYVWLDAPIGYMGSFKNLCDKRGDTTSFDEYWKKDSSAELYHFIGKDIVYFHSLFWPAMLEGSNFRKPTNLFVHGYVTVNGAKMSKSRGTFIKASTWLNHFDADSLRYYYTAKLSSRIDDIDLNLEDFVQRVNADIVNKVVNLASRNAGFISKRFDGVLAAELADPALYKTFTDAAESIGEAWDSREFGKAIREIMALADVANRYVDEQAPWVVAKQEGRDADLQAICTMGLNMFRVLMTWLKPVLPQLAARAEAFLNSELSWDAIQQPLLAHKVNPFKALYNRIEMKQVEALVEASKEEVKATAAPVTGPLADDPIQETITFDDFAKVDLRVALIENAEFVEGSDKLLRLTLDLGGEKRNVFSGIRSAYPDPQPLIGRLTVMVANLAPRKMRFGISEGMVMAAGPGGKDIFLLSPDDGAKPGQQVK.

The 'HIGH' region motif lies at 15–25; that stretch reads PYANGSIHLGH. Positions 146, 149, 159, and 162 each coordinate Zn(2+). The 'KMSKS' region motif lies at 333-337; the sequence is KMSKS. An ATP-binding site is contributed by lysine 336. The tRNA-binding domain maps to 575–677; that stretch reads DFAKVDLRVA…DGAKPGQQVK (103 aa).

It belongs to the class-I aminoacyl-tRNA synthetase family. MetG type 1 subfamily. In terms of assembly, homodimer. Zn(2+) is required as a cofactor.

It localises to the cytoplasm. It catalyses the reaction tRNA(Met) + L-methionine + ATP = L-methionyl-tRNA(Met) + AMP + diphosphate. In terms of biological role, is required not only for elongation of protein synthesis but also for the initiation of all mRNA translation through initiator tRNA(fMet) aminoacylation. In Klebsiella pneumoniae (strain 342), this protein is Methionine--tRNA ligase.